Consider the following 172-residue polypeptide: SsrA-binding protein (172 aa).

The protein belongs to the SmpB family.

The protein localises to the cytoplasm. Its function is as follows. Required for rescue of stalled ribosomes mediated by trans-translation. Binds to transfer-messenger RNA (tmRNA), required for stable association of tmRNA with ribosomes. tmRNA and SmpB together mimic tRNA shape, replacing the anticodon stem-loop with SmpB. tmRNA is encoded by the ssrA gene; the 2 termini fold to resemble tRNA(Ala) and it encodes a 'tag peptide', a short internal open reading frame. During trans-translation Ala-aminoacylated tmRNA acts like a tRNA, entering the A-site of stalled ribosomes, displacing the stalled mRNA. The ribosome then switches to translate the ORF on the tmRNA; the nascent peptide is terminated with the 'tag peptide' encoded by the tmRNA and targeted for degradation. The ribosome is freed to recommence translation, which seems to be the essential function of trans-translation. The chain is SsrA-binding protein from Dehalococcoides mccartyi (strain ATCC BAA-2266 / KCTC 15142 / 195) (Dehalococcoides ethenogenes (strain 195)).